The chain runs to 71 residues: Large ribosomal subunit protein bL31 (71 aa).

The Zn(2+) site is built by C16, C18, C37, and C40.

It belongs to the bacterial ribosomal protein bL31 family. Type A subfamily. In terms of assembly, part of the 50S ribosomal subunit. It depends on Zn(2+) as a cofactor.

Binds the 23S rRNA. This Pseudomonas aeruginosa (strain LESB58) protein is Large ribosomal subunit protein bL31.